An 870-amino-acid chain; its full sequence is Dynamin-2 (870 aa).

Residues 28–294 form the Dynamin-type G domain; it reads HLDLPQIAVV…LTNHIRESLP (267 aa). The G1 motif stretch occupies residues 38–45; that stretch reads GGQSAGKS. Positions 41, 43, 44, 45, 46, 59, and 60 each coordinate GDP. Residues 64-66 form a G2 motif region; sequence VTR. Residues 136 to 139 are G3 motif; it reads DLPG. The tract at residues 205–208 is G4 motif; that stretch reads TKLD. Residues Lys-206, Asp-208, and Asp-211 each contribute to the GDP site. A Phosphotyrosine modification is found at Tyr-231. The G5 motif stretch occupies residues 235–238; the sequence is VNRS. Residues Asn-236, Arg-237, and Gln-239 each coordinate GDP. At Lys-299 the chain carries N6-acetyllysine. Positions 519–625 constitute a PH domain; sequence LVIRRGWLTI…WKASFLRAGV (107 aa). Tyr-597 is subject to Phosphotyrosine. Position 598 is an N6-acetyllysine (Lys-598). The GED domain maps to 653–744; that stretch reads VETIRNLVDS…IIGDISTSTV (92 aa). The segment at 741-870 is disordered; that stretch reads TSTVSTPVPP…IRPAEPSLLD (130 aa). Thr-755 is subject to Phosphothreonine. Positions 756–767 are enriched in polar residues; sequence WLQNTSSHSPTP. A Phosphoserine; by CDK1 modification is found at Ser-764. Positions 826-846 are enriched in pro residues; the sequence is SAPPQIPSRPARIPPGIPPGV. Low complexity predominate over residues 847–864; the sequence is PSRRAPAAPSRPTIIRPA.

This sequence belongs to the TRAFAC class dynamin-like GTPase superfamily. Dynamin/Fzo/YdjA family. In terms of assembly, oligomerizes into a helical polymer that self-assembles around the vesicle membrane, when associated to the menbrane through lipid binding. Interacts with SHANK1 and SHANK2. Interacts with SNX9. Interacts (via C-terminal proline-rich domain (PRD)) with SNX18 (via SH3 domain); this interaction regulates ATG9A and ATG16L1 trafficking from recycling endosomes to sites of autophagosome formation. Interacts with SNX33 (via SH3 domain). Interacts with PSTPIP1 (via SH3 domain). Interacts with CTNND2. Interacts (via C-terminal proline-rich domain (PRD)) with BIN1 (via SH3 domain); this interaction allows the recruitment of DNM2 to the membrane tubules and inhibits self-assembly-stimulated GTPase activity on the membrane. Interacts with GABARAP, GABARAPL1 and GABARAPL2. Interacts with MAP1LC3B (the lipidate and non-lipidated LC3 form); this interaction mediates recycling endosome scission leading to autophagosome release. Interacts with ITSN1. Interacts with MYOF. May interact with PIK3C3. May be a component of a complex composed of RAB5A (in GDP-bound form), DYN2 and PIK3C3. Interacts with SDC4; this interaction is markedly enhanced at focal ahesion site upon induction of focal adhesions and stress-fiber formation. Interacts with ACTN1. Interacts with CTTN; this interaction stimulates the intrinsic GTPase activity of DNM2 and stabilizes the association of DNM2 and actin filaments; in addition this interaction is stimulated by ligand binding to the receptor, leading to the recruitment of the DNM2-CTTN complex to the sequestered receptor-ligand complex to its internalization. Interacts with NOSTRIN (via SH3 domain); this interaction allows the recruitment of NOS3 to dynamin-positive structures. Interacts (via C-terminal proline-rich domain (PRD)) with SH3BP4 (via SH3 domain); this interaction controls the GTPase activity and is prevented by EGFR-induced tyrosine phosphorylation of either DNM2 or SH3BP4. Interacts with MYO1E (via SH3 domain). Interacts with TUBG1; this interaction may participate in centrosome cohesion. Phosphorylation at Ser-848 by GSK3-alpha relieves the inhibition of BIN1 and promotes endocytosis. Phosphorylation at Ser-764 by CDK1 is greatly increased upon mitotic entry. It regulates cytokinesis downstream of calcineurin, and does not affect clathrin-mediated endocytosis. Dephosphorylated by calcineurin/PP2 during cytokinesis in a Ca(2+)- and calmodulin-dependent manner. Phosphorylated on tyrosine residues by EGFR. Phosphorylated on tyrosine residues after activation of SRC. Ubiquitously expressed. Brain expression is restricted to glial cells and fibroblasts. Highest levels in the testis.

It localises to the cytoplasm. The protein localises to the cytoskeleton. Its subcellular location is the cytoplasmic vesicle. It is found in the clathrin-coated vesicle. The protein resides in the cell projection. It localises to the uropodium. The protein localises to the endosome. Its subcellular location is the microtubule organizing center. It is found in the centrosome. The protein resides in the centriole. It localises to the recycling endosome. The protein localises to the phagocytic cup. Its subcellular location is the phagosome membrane. It is found in the podosome. The protein resides in the cell junction. It localises to the postsynaptic density. The protein localises to the synapse. Its subcellular location is the synaptosome. It is found in the midbody. The protein resides in the membrane. It localises to the clathrin-coated pit. The protein localises to the cell membrane. It carries out the reaction GTP + H2O = GDP + phosphate + H(+). In terms of biological role, catalyzes the hydrolysis of GTP and utilizes this energy to mediate vesicle scission at plasma membrane during endocytosis and filament remodeling at many actin structures during organization of the actin cytoskeleton. Plays an important role in vesicular trafficking processes, namely clathrin-mediated endocytosis (CME), exocytic and clathrin-coated vesicle from the trans-Golgi network, and PDGF stimulated macropinocytosis. During vesicular trafficking process, associates to the membrane, through lipid binding, and self-assembles into ring-like structure through oligomerization to form a helical polymer around the vesicle membrane and leading to vesicle scission. Plays a role in organization of the actin cytoskeleton by mediating arrangement of stress fibers and actin bundles in podocytes. During organization of the actin cytoskeleton, self-assembles into ring-like structure that directly bundles actin filaments to form typical membrane tubules decorated with dynamin spiral polymers. Self-assembly increases GTPase activity and the GTP hydrolysis causes the rapid depolymerization of dynamin spiral polymers, and results in dispersion of actin bundles. Remodels, through its interaction with CTTN, bundled actin filaments in a GTPase-dependent manner and plays a role in orchestrating the global actomyosin cytoskeleton. The interaction with CTTN stabilizes the interaction of DNM2 and actin filaments and stimulates the intrinsic GTPase activity that results in actin filament-barbed ends and increases the sensitivity of filaments in bundles to the actin depolymerizing factor, CFL1. Plays a role in the autophagy process, by participating in the formation of ATG9A vesicles destined for the autophagosomes through its interaction with SNX18, by mediating recycling endosome scission leading to autophagosome release through MAP1LC3B interaction and by regulating maturation of apoptotic cell corpse-containing phagosomes by recruiting PIK3C3 to the phagosome membrane. Also plays a role in cytokinesis. May participate in centrosome cohesion through its interaction with TUBG1. Plays a role in the regulation of neuron morphology, axon growth and formation of neuronal growth cones. Involved in membrane tubulation. This is Dynamin-2 from Rattus norvegicus (Rat).